The sequence spans 269 residues: Endo-1,3-1,4-beta-glycanase ExoK (269 aa).

The N-terminal stretch at 1–29 (MTIDRYRRFARLAFIATLPLAGLATAAAA) is a signal peptide. Residues 40–252 (DDFDTLDTRV…RVAFTAAGDE (213 aa)) enclose the GH16 domain. Catalysis depends on Glu-138, which acts as the Nucleophile. Glu-142 functions as the Proton donor in the catalytic mechanism.

It belongs to the glycosyl hydrolase 16 family.

Its subcellular location is the secreted. It participates in glycan metabolism; exopolysaccharide biosynthesis. Cleaves high molecular weight succinoglycan to yield LMW succinoglycan. Dynamically regulates the molecular weight distribution of succinoglycan by cleaving nascent succinoglycan only during a limited period after its synthesis, perhaps before it undergoes a time-dependent change in its conformation or aggregation state. This is Endo-1,3-1,4-beta-glycanase ExoK (exoK) from Rhizobium meliloti (strain 1021) (Ensifer meliloti).